A 356-amino-acid polypeptide reads, in one-letter code: Proline-rich protein 19 (356 aa).

Residues 1–12 (MDTQGPVSQPFQ) show a composition bias toward polar residues. Disordered stretches follow at residues 1-53 (MDTQ…RDPP), 95-143 (LVPG…ELSG), 216-255 (INSP…RGSL), and 312-331 (PSSP…SPPS). The segment covering 19-29 (RVRRRKTRRER) has biased composition (basic residues).

Interacts with CNTD1.

It localises to the nucleus. It is found in the chromosome. Its function is as follows. Promotes meiotic crossing over formation through its interaction with CNTD1 by participating in the crossover differentiation step of crossover-specific recombination intermediates. The chain is Proline-rich protein 19 from Homo sapiens (Human).